Here is a 284-residue protein sequence, read N- to C-terminus: Bifunctional protein FolD (284 aa).

NADP(+)-binding positions include 165-167 (GRS), Ser-190, and Val-231.

This sequence belongs to the tetrahydrofolate dehydrogenase/cyclohydrolase family. As to quaternary structure, homodimer.

The enzyme catalyses (6R)-5,10-methylene-5,6,7,8-tetrahydrofolate + NADP(+) = (6R)-5,10-methenyltetrahydrofolate + NADPH. It carries out the reaction (6R)-5,10-methenyltetrahydrofolate + H2O = (6R)-10-formyltetrahydrofolate + H(+). It participates in one-carbon metabolism; tetrahydrofolate interconversion. Functionally, catalyzes the oxidation of 5,10-methylenetetrahydrofolate to 5,10-methenyltetrahydrofolate and then the hydrolysis of 5,10-methenyltetrahydrofolate to 10-formyltetrahydrofolate. The sequence is that of Bifunctional protein FolD from Natranaerobius thermophilus (strain ATCC BAA-1301 / DSM 18059 / JW/NM-WN-LF).